A 146-amino-acid chain; its full sequence is D-aminoacyl-tRNA deacylase (146 aa).

The Gly-cisPro motif, important for rejection of L-amino acids signature appears at 138–139; the sequence is GP.

Belongs to the DTD family. As to quaternary structure, homodimer.

It localises to the cytoplasm. It catalyses the reaction glycyl-tRNA(Ala) + H2O = tRNA(Ala) + glycine + H(+). The catalysed reaction is a D-aminoacyl-tRNA + H2O = a tRNA + a D-alpha-amino acid + H(+). An aminoacyl-tRNA editing enzyme that deacylates mischarged D-aminoacyl-tRNAs. Also deacylates mischarged glycyl-tRNA(Ala), protecting cells against glycine mischarging by AlaRS. Acts via tRNA-based rather than protein-based catalysis; rejects L-amino acids rather than detecting D-amino acids in the active site. By recycling D-aminoacyl-tRNA to D-amino acids and free tRNA molecules, this enzyme counteracts the toxicity associated with the formation of D-aminoacyl-tRNA entities in vivo and helps enforce protein L-homochirality. This chain is D-aminoacyl-tRNA deacylase, found in Xanthomonas oryzae pv. oryzae (strain MAFF 311018).